A 163-amino-acid polypeptide reads, in one-letter code: Bacterial microcompartment assembly protein PduM (163 aa).

It belongs to the PduM family. Interacts with shell protein PduK.

The protein resides in the bacterial microcompartment. It functions in the pathway polyol metabolism; 1,2-propanediol degradation. Plays an essential role in assembly and/or stability of the bacterial microcompartment (BMC) dedicated to 1,2-propanediol (1,2-PD) degradation. Its function is as follows. Expression of a cosmid containing the full 21-gene pdu operon in E.coli allows E.coli to grow on 1,2-propanediol (1,2-PD) with the appearance of bacterial microcompartments (BMC) in its cytoplasm. In terms of biological role, the 1,2-PD-specific bacterial microcompartment (BMC) concentrates low levels of 1,2-PD catabolic enzymes, concentrates volatile reaction intermediates thus enhancing pathway flux and keeps the level of toxic, mutagenic propionaldehyde low. This is Bacterial microcompartment assembly protein PduM from Citrobacter freundii.